Here is a 737-residue protein sequence, read N- to C-terminus: Ribosome-releasing factor 2, mitochondrial (737 aa).

The transit peptide at 1–29 (MLKYALHSGGMPRNRLLRQLSAHIFRRSY) directs the protein to the mitochondrion. The tr-type G domain occupies 31–310 (SNIRNIGILA…AVNTYLPAPE (280 aa)). Residues 40-47 (AHIDAGKT), 104-108 (DTPGH), and 158-161 (NKMD) contribute to the GTP site.

It belongs to the TRAFAC class translation factor GTPase superfamily. Classic translation factor GTPase family. EF-G/EF-2 subfamily.

The protein localises to the mitochondrion. Functionally, mitochondrial GTPase that mediates the disassembly of ribosomes from messenger RNA at the termination of mitochondrial protein biosynthesis. Not involved in the GTP-dependent ribosomal translocation step during translation elongation. The chain is Ribosome-releasing factor 2, mitochondrial from Drosophila pseudoobscura pseudoobscura (Fruit fly).